The chain runs to 997 residues: Translation initiation factor IF-2 (997 aa).

Residues 101–409 (ELAAEQAAAR…QHQDRRHEQV (309 aa)) form a disordered region. Low complexity-rich tracts occupy residues 116 to 185 (AEAV…QAEP), 195 to 208 (AAPA…VEPA), and 244 to 280 (PSAP…PAAP). A compositionally biased stretch (basic and acidic residues) spans 281–292 (DRAREEARRAAE). The span at 385 to 394 (RAGGKGGRGG) shows a compositional bias: gly residues. Over residues 400 to 409 (QHQDRRHEQV) the composition is skewed to basic and acidic residues. The tr-type G domain maps to 498-665 (PRAPVVTVMG…NVLLQAEILE (168 aa)). Residues 507–514 (GHVDHGKT) form a G1 region. 507 to 514 (GHVDHGKT) contacts GTP. The G2 stretch occupies residues 532 to 536 (GITQH). A G3 region spans residues 553-556 (DTPG). GTP-binding positions include 553 to 557 (DTPGH) and 607 to 610 (NKID). Residues 607–610 (NKID) are G4. Positions 643–645 (SAK) are G5.

This sequence belongs to the TRAFAC class translation factor GTPase superfamily. Classic translation factor GTPase family. IF-2 subfamily.

The protein localises to the cytoplasm. Functionally, one of the essential components for the initiation of protein synthesis. Protects formylmethionyl-tRNA from spontaneous hydrolysis and promotes its binding to the 30S ribosomal subunits. Also involved in the hydrolysis of GTP during the formation of the 70S ribosomal complex. This chain is Translation initiation factor IF-2, found in Bordetella bronchiseptica (strain ATCC BAA-588 / NCTC 13252 / RB50) (Alcaligenes bronchisepticus).